Here is a 145-residue protein sequence, read N- to C-terminus: Protein phosphatase 1 regulatory subunit 14D (145 aa).

Positions M1–P14 are enriched in low complexity. Residues M1 to V59 are disordered. Residues K21–W25 are interaction with protein phosphatase 1. Residues K21 to T32 are compositionally biased toward basic residues. The span at S37–K47 shows a compositional bias: basic and acidic residues. T58 carries the post-translational modification Phosphothreonine.

The protein belongs to the PP1 inhibitor family. In terms of processing, phosphorylated on several residues. Detected in colon, intestine, kidney and brain cortex.

Its subcellular location is the cytoplasm. Its function is as follows. Inhibitor of PPP1CA. Has inhibitory activity only when phosphorylated, creating a molecular switch for regulating the phosphorylation status of PPP1CA substrates and smooth muscle contraction. The polypeptide is Protein phosphatase 1 regulatory subunit 14D (PPP1R14D) (Homo sapiens (Human)).